We begin with the raw amino-acid sequence, 672 residues long: Threonine--tRNA ligase (672 aa).

The TGS domain maps to 1–64 (MTELLKISLP…EGDAELALIT (64 aa)). Residues 257–566 (DHRKLGREMD…LIEHFAGRLP (310 aa)) form a catalytic region. 3 residues coordinate Zn(2+): C362, H413, and H543.

The protein belongs to the class-II aminoacyl-tRNA synthetase family. As to quaternary structure, homodimer. Requires Zn(2+) as cofactor.

It is found in the cytoplasm. It carries out the reaction tRNA(Thr) + L-threonine + ATP = L-threonyl-tRNA(Thr) + AMP + diphosphate + H(+). In terms of biological role, catalyzes the attachment of threonine to tRNA(Thr) in a two-step reaction: L-threonine is first activated by ATP to form Thr-AMP and then transferred to the acceptor end of tRNA(Thr). Also edits incorrectly charged L-seryl-tRNA(Thr). In Erythrobacter litoralis (strain HTCC2594), this protein is Threonine--tRNA ligase.